The chain runs to 220 residues: Ribose-5-phosphate isomerase A (220 aa).

Substrate is bound by residues 25–28 (TGST), 80–83 (DGAD), and 93–96 (KGGG). Glu102 functions as the Proton acceptor in the catalytic mechanism. Lys120 provides a ligand contact to substrate.

The protein belongs to the ribose 5-phosphate isomerase family. As to quaternary structure, homodimer.

It carries out the reaction aldehydo-D-ribose 5-phosphate = D-ribulose 5-phosphate. The protein operates within carbohydrate degradation; pentose phosphate pathway; D-ribose 5-phosphate from D-ribulose 5-phosphate (non-oxidative stage): step 1/1. Catalyzes the reversible conversion of ribose-5-phosphate to ribulose 5-phosphate. This Bacillus anthracis protein is Ribose-5-phosphate isomerase A.